The following is a 186-amino-acid chain: Tumor necrosis factor alpha-induced protein 8-like protein 1 (186 aa).

The protein belongs to the TNFAIP8 family. Interacts with FBXW5; TNFAIP8L1 competes with TSC2 to bind FBXW5 increasing TSC2 stability by preventing its ubiquitination.

The protein localises to the cytoplasm. In terms of biological role, acts as a negative regulator of mTOR activity. In Bos taurus (Bovine), this protein is Tumor necrosis factor alpha-induced protein 8-like protein 1 (TNFAIP8L1).